The primary structure comprises 415 residues: Hydroxysteroid dehydrogenase-like protein 2 (415 aa).

NADP(+) is bound by residues 17-23 (GASRGIG), K42, and D74. The Proton acceptor role is filled by Y168. K172 is an NADP(+) binding site. In terms of domain architecture, SCP2 spans 304–412 (AGPVSEMFNT…KLEKMMAMMK (109 aa)).

The protein belongs to the short-chain dehydrogenases/reductases (SDR) family.

It is found in the peroxisome. The protein localises to the mitochondrion. Functionally, has apparently no steroid dehydrogenase activity. Might act as a metabolic regulator that affects systemic adaptation to nutritional cues. This is Hydroxysteroid dehydrogenase-like protein 2 (hsdl2) from Danio rerio (Zebrafish).